The chain runs to 1059 residues: Ubiquitin carboxyl-terminal hydrolase 36 (1059 aa).

Disordered regions lie at residues 22-45 and 102-145; these read LGGNSSAGSSTDQAKSGEDTNGSL and GKLV…KPKR. The span at 23-45 shows a compositional bias: polar residues; the sequence is GGNSSAGSSTDQAKSGEDTNGSL. Residues 121–138 are compositionally biased toward low complexity; the sequence is HPNNQSHHNHPHPTSNPN. The USP domain maps to 168–457; that stretch reads TGMINVGNTC…NAYIMFFELD (290 aa). The active-site Nucleophile is the cysteine 177. Histidine 416 (proton acceptor) is an active-site residue. Disordered regions lie at residues 464-512, 554-853, 941-1005, and 1022-1059; these read PPAN…YTNG, ATSA…VTSN, RQRD…FYNQ, and FGGAGSAKFQQQRALQRHLSAGGGFSRRQPSAQQQQQT. Composition is skewed to low complexity over residues 479-494 and 561-580; these read STTPVPAATVSSPSPT and NGNKSSSPSSNSSSNHKSIN. Phosphoserine occurs at positions 490 and 492. A compositionally biased stretch (polar residues) spans 603 to 615; sequence TTAQLPSMPNMTE. Threonine 632 and threonine 636 each carry phosphothreonine. Phosphoserine occurs at positions 646 and 648. Over residues 673-702 the composition is skewed to polar residues; sequence ESGQTNGHSKTNGSLTNGSASSSVHVNNSK. A compositionally biased stretch (basic and acidic residues) spans 703–720; it reads QKTDAIDEIFKSLKKSAD. Serine 721 carries the post-translational modification Phosphoserine. Residues 721-730 show a composition bias toward acidic residues; sequence SEEDDDEEEP. The segment covering 740–750 has biased composition (low complexity); sequence PQKQSQSQSKA. A compositionally biased stretch (pro residues) spans 751–760; the sequence is PPSPKTPPSP. Serine 753 is modified (phosphoserine). At threonine 756 the chain carries Phosphothreonine. Serine 759 is modified (phosphoserine). The span at 779 to 788 shows a compositional bias: acidic residues; that stretch reads DAIDDDDDAV. Threonine 799 bears the Phosphothreonine mark. The span at 806 to 818 shows a compositional bias: polar residues; the sequence is NPFSSSKPSTDSP. The residue at position 817 (serine 817) is a Phosphoserine. A Phosphothreonine modification is found at threonine 820. Residues 833–853 show a composition bias toward polar residues; that stretch reads ALKSHQQPRVGNGYQSNVTSN. The segment covering 963 to 974 has biased composition (low complexity); that stretch reads SGSAKGNNASNS.

It belongs to the peptidase C19 family. In terms of assembly, interacts with atms/PAF1, but not with CycT.

Its subcellular location is the nucleus. The protein resides in the nucleolus. It carries out the reaction Thiol-dependent hydrolysis of ester, thioester, amide, peptide and isopeptide bonds formed by the C-terminal Gly of ubiquitin (a 76-residue protein attached to proteins as an intracellular targeting signal).. Its function is as follows. Required for maintaining multiple types of adult stem cells, including male and female germline, epithelial follicle cell and intestinal stem cells. May function as a transcriptional repressor by continually deubiquiting histone H2B at the promoters of genes critical for cellular differentiation, thereby preventing histone H3 'Lys-4' trimethylation (H3K4). Controls selective autophagy activation by ubiquitinated proteins. In Drosophila sechellia (Fruit fly), this protein is Ubiquitin carboxyl-terminal hydrolase 36 (Usp36).